A 178-amino-acid chain; its full sequence is Interleukin-10 (178 aa).

Positions 1-18 are cleaved as a signal peptide; it reads MHSSALLCCLVLLTGVRA. Cystine bridges form between Cys-30-Cys-126 and Cys-80-Cys-132. An N-linked (GlcNAc...) asparagine glycan is attached at Asn-134.

The protein belongs to the IL-10 family. In terms of assembly, homodimer. Interacts with IL10RA and IL10RB.

It localises to the secreted. In terms of biological role, major immune regulatory cytokine that acts on many cells of the immune system where it has profound anti-inflammatory functions, limiting excessive tissue disruption caused by inflammation. Mechanistically, IL10 binds to its heterotetrameric receptor comprising IL10RA and IL10RB leading to JAK1 and STAT2-mediated phosphorylation of STAT3. In turn, STAT3 translocates to the nucleus where it drives expression of anti-inflammatory mediators. Targets antigen-presenting cells (APCs) such as macrophages and monocytes and inhibits their release of pro-inflammatory cytokines including granulocyte-macrophage colony-stimulating factor /GM-CSF, granulocyte colony-stimulating factor/G-CSF, IL-1 alpha, IL-1 beta, IL-6, IL-8 and TNF-alpha. Also interferes with antigen presentation by reducing the expression of MHC-class II and co-stimulatory molecules, thereby inhibiting their ability to induce T cell activation. In addition, controls the inflammatory response of macrophages by reprogramming essential metabolic pathways including mTOR signaling. The sequence is that of Interleukin-10 (IL10) from Macaca nemestrina (Pig-tailed macaque).